The sequence spans 440 residues: Elongation factor 1-alpha (440 aa).

Residues 5 to 228 (KPHINLVVIG…ALDTYIQPPK (224 aa)) enclose the tr-type G domain. The segment at 14-21 (GHVDHGKS) is G1. 14 to 21 (GHVDHGKS) contacts GTP. Residue S21 coordinates Mg(2+). Residues 70–74 (GVTID) are G2. Residues 91–94 (DAPG) are G3. GTP contacts are provided by residues 91 to 95 (DAPGH) and 153 to 156 (NKMD). The tract at residues 153–156 (NKMD) is G4. Positions 194 to 196 (SAW) are G5.

It belongs to the TRAFAC class translation factor GTPase superfamily. Classic translation factor GTPase family. EF-Tu/EF-1A subfamily.

It localises to the cytoplasm. The enzyme catalyses GTP + H2O = GDP + phosphate + H(+). Functionally, GTP hydrolase that promotes the GTP-dependent binding of aminoacyl-tRNA to the A-site of ribosomes during protein biosynthesis. The polypeptide is Elongation factor 1-alpha (Hyperthermus butylicus (strain DSM 5456 / JCM 9403 / PLM1-5)).